Here is a 64-residue protein sequence, read N- to C-terminus: Beta sliding clamp (64 aa).

This sequence belongs to the beta sliding clamp family. As to quaternary structure, forms a ring-shaped head-to-tail homodimer around DNA which binds and tethers DNA polymerases and other proteins to the DNA. The DNA replisome complex has a single clamp-loading complex (3 tau and 1 each of delta, delta', psi and chi subunits) which binds 3 Pol III cores (1 core on the leading strand and 2 on the lagging strand) each with a beta sliding clamp dimer. Additional proteins in the replisome are other copies of gamma, psi and chi, Ssb, DNA helicase and RNA primase.

It localises to the cytoplasm. Functionally, confers DNA tethering and processivity to DNA polymerases and other proteins. Acts as a clamp, forming a ring around DNA (a reaction catalyzed by the clamp-loading complex) which diffuses in an ATP-independent manner freely and bidirectionally along dsDNA. Initially characterized for its ability to contact the catalytic subunit of DNA polymerase III (Pol III), a complex, multichain enzyme responsible for most of the replicative synthesis in bacteria; Pol III exhibits 3'-5' exonuclease proofreading activity. The beta chain is required for initiation of replication as well as for processivity of DNA replication. This is Beta sliding clamp (dnaN) from Actinobacillus pleuropneumoniae (Haemophilus pleuropneumoniae).